We begin with the raw amino-acid sequence, 1012 residues long: Antigenic heat-stable 120 kDa protein (1012 aa).

Disordered stretches follow at residues 1–73 (DTSE…TSDP) and 348–396 (GQSK…PQSQ). Over residues 12–27 (EYTEEQKQTLEQEQKE) the composition is skewed to basic and acidic residues. The segment covering 47-61 (SASSAQSTPSMSALS) has biased composition (low complexity). Polar residues-rich tracts occupy residues 62-73 (GNISPDSQTSDP), 348-373 (GQSK…QYKQ), and 380-396 (PTNQ…PQSQ).

It localises to the cytoplasm. The polypeptide is Antigenic heat-stable 120 kDa protein (sca4) (Rickettsia slovaca).